Reading from the N-terminus, the 387-residue chain is Beta-carotene 4-ketolase (387 aa).

The tract at residues 1-78 (MPHSIDMEDS…GNPTVDDASQ (78 aa)) is disordered. 2 stretches are compositionally biased toward polar residues: residues 43–53 (NWQTQYHSSEG) and 65–78 (DATT…DASQ).

The enzyme catalyses echinenone + 2 AH2 + 2 O2 = canthaxanthin + 2 A + 3 H2O. It catalyses the reaction all-trans-beta-carotene + 2 AH2 + 2 O2 = echinenone + 2 A + 3 H2O. Its pathway is carotenoid biosynthesis. In terms of biological role, involved in the biosynthesis of ketocarotenoids which are powerful anti-oxidative molecules. Catalyzes the conversion of beta-carotene to canthaxanthin via echinenone. This is Beta-carotene 4-ketolase from Protosiphon botryoides (Green alga).